Consider the following 150-residue polypeptide: MSLVRSGNVLDPMSVDFWADADPFGAVRSLAERCPVLTNVRVDWKETPTAHVFTADLPGVRKDQAKVEVEDGGVLVISGERAREEDVDGKNDERWHHVERSSGKFQRRFRLPRGARVDQVSASMDNGVLTVTVPKEETKKPQLKAIPISG.

The 120-residue stretch at 31–150 (AERCPVLTNV…PQLKAIPISG (120 aa)) folds into the sHSP domain.

This sequence belongs to the small heat shock protein (HSP20) family. In terms of assembly, may form oligomeric structures.

The protein localises to the cytoplasm. This Oryza sativa subsp. japonica (Rice) protein is 16.6 kDa heat shock protein (HSP16.6).